The sequence spans 500 residues: NAD(P)H-quinone oxidoreductase chain 4, chloroplastic (500 aa).

Transmembrane regions (helical) follow at residues phenylalanine 4–phenylalanine 24, isoleucine 37–leucine 57, glycine 84–alanine 104, serine 111–phenylalanine 129, leucine 134–methionine 154, phenylalanine 167–leucine 187, alanine 208–isoleucine 228, histidine 242–valine 262, alanine 272–alanine 292, isoleucine 305–aspartate 325, glycine 330–glycine 350, isoleucine 374–alanine 396, isoleucine 416–methionine 436, and leucine 462–valine 482.

Belongs to the complex I subunit 4 family.

The protein resides in the plastid. The protein localises to the chloroplast thylakoid membrane. It catalyses the reaction a plastoquinone + NADH + (n+1) H(+)(in) = a plastoquinol + NAD(+) + n H(+)(out). The catalysed reaction is a plastoquinone + NADPH + (n+1) H(+)(in) = a plastoquinol + NADP(+) + n H(+)(out). The polypeptide is NAD(P)H-quinone oxidoreductase chain 4, chloroplastic (Liriodendron tulipifera (Tuliptree)).